Here is a 303-residue protein sequence, read N- to C-terminus: Phosphatidylglycerol--prolipoprotein diacylglyceryl transferase (303 aa).

A run of 4 helical transmembrane segments spans residues 18 to 38 (LGPF…LVGL), 58 to 78 (LLPI…VAFE), 106 to 126 (IWGG…SIIF), and 133 to 153 (EPFW…QAIG). Arg154 provides a ligand contact to a 1,2-diacyl-sn-glycero-3-phospho-(1'-sn-glycerol). A run of 3 helical transmembrane segments spans residues 193-213 (PTFL…IFLF), 223-243 (LPPG…RFWI), and 266-286 (IAQL…WRIY).

It belongs to the Lgt family.

Its subcellular location is the cell inner membrane. The catalysed reaction is L-cysteinyl-[prolipoprotein] + a 1,2-diacyl-sn-glycero-3-phospho-(1'-sn-glycerol) = an S-1,2-diacyl-sn-glyceryl-L-cysteinyl-[prolipoprotein] + sn-glycerol 1-phosphate + H(+). It participates in protein modification; lipoprotein biosynthesis (diacylglyceryl transfer). In terms of biological role, catalyzes the transfer of the diacylglyceryl group from phosphatidylglycerol to the sulfhydryl group of the N-terminal cysteine of a prolipoprotein, the first step in the formation of mature lipoproteins. The sequence is that of Phosphatidylglycerol--prolipoprotein diacylglyceryl transferase from Prochlorococcus marinus (strain NATL1A).